A 417-amino-acid polypeptide reads, in one-letter code: UDP-N-acetylglucosamine 1-carboxyvinyltransferase (417 aa).

22–23 provides a ligand contact to phosphoenolpyruvate; the sequence is KN. Residue arginine 91 coordinates UDP-N-acetyl-alpha-D-glucosamine. The active-site Proton donor is cysteine 115. At cysteine 115 the chain carries 2-(S-cysteinyl)pyruvic acid O-phosphothioketal. UDP-N-acetyl-alpha-D-glucosamine contacts are provided by residues 120–124, aspartate 304, and isoleucine 326; that span reads RPVDL.

It belongs to the EPSP synthase family. MurA subfamily.

The protein resides in the cytoplasm. The enzyme catalyses phosphoenolpyruvate + UDP-N-acetyl-alpha-D-glucosamine = UDP-N-acetyl-3-O-(1-carboxyvinyl)-alpha-D-glucosamine + phosphate. It participates in cell wall biogenesis; peptidoglycan biosynthesis. Functionally, cell wall formation. Adds enolpyruvyl to UDP-N-acetylglucosamine. This chain is UDP-N-acetylglucosamine 1-carboxyvinyltransferase, found in Nitratidesulfovibrio vulgaris (strain DSM 19637 / Miyazaki F) (Desulfovibrio vulgaris).